We begin with the raw amino-acid sequence, 1818 residues long: Unconventional myosin-Vb (1818 aa).

Positions Thr8–Pro60 constitute a Myosin N-terminal SH3-like domain. The interval Val21–Leu40 is requires for interaction with LIMA1. The Myosin motor domain maps to Val69–Ala762. Gly163 to Thr170 serves as a coordination point for ATP. Residues Leu641–Asp663 form an actin-binding region. IQ domains follow at residues Phe765–Ser794, Leu788–Ala817, Arg813–Ile842, Val836–Ala865, Met861–Val890, and Glu884–Ser913. Disordered regions lie at residues Leu1086–Asp1120 and Gln1161–Asp1188. The segment covering Pro1098–Ile1118 has biased composition (polar residues). Coiled-coil stretches lie at residues Met1140 to Arg1261 and Leu1313 to Gln1415. Ser1416 is subject to Phosphoserine. A Dilute domain is found at Ser1496–Glu1773.

Belongs to the TRAFAC class myosin-kinesin ATPase superfamily. Myosin family. In terms of assembly, component of the CART complex, at least composed of ACTN4, HGS/HRS, MYO5B and TRIM3. Interacts with RAB11FIP2. Interacts with RAB11A and RAB8A. Found in a complex with CFTR and RAB11A. Interacts with NPC1L1. Interacts with LIMA1.

It is found in the cytoplasm. May be involved in vesicular trafficking via its association with the CART complex. The CART complex is necessary for efficient transferrin receptor recycling but not for EGFR degradation. Required in a complex with RAB11A and RAB11FIP2 for the transport of NPC1L1 to the plasma membrane. Together with RAB11A participates in CFTR trafficking to the plasma membrane and TF (transferrin) recycling in nonpolarized cells. Together with RAB11A and RAB8A participates in epithelial cell polarization. Together with RAB25 regulates transcytosis. Required for proper localization of bile salt export pump ABCB11 at the apical/canalicular plasma membrane of hepatocytes. The protein is Unconventional myosin-Vb (Myo5b) of Mus musculus (Mouse).